Reading from the N-terminus, the 77-residue chain is U-actitoxin-Avd12a (77 aa).

An N-terminal signal peptide occupies residues 1–23 (MALFRMLFLCAVLVLLTSKEGMS). A propeptide spanning residues 24–29 (YEEPEN) is cleaved from the precursor. The EGF-like domain maps to 31 to 73 (EGVACTGQYAESFCLNGGTCRYIQSIGEYYCICNGDYTGHRCE). 3 disulfide bridges follow: cysteine 35-cysteine 50, cysteine 44-cysteine 61, and cysteine 63-cysteine 72.

This sequence belongs to the EGF domain peptide family.

The protein resides in the secreted. It is found in the nematocyst. Functionally, has both toxic and EGF activity. Its EGF activity consists of rounding cells (morphological change) and inducing tyrosine phosphorylation of the EGFR in A431 cells, but with a lower potency that human EGF. The sequence is that of U-actitoxin-Avd12a from Anemonia viridis (Snakelocks anemone).